A 493-amino-acid chain; its full sequence is Phospholipid transfer protein (493 aa).

The N-terminal stretch at 1–17 (MALFGALFLALLAGAHA) is a signal peptide. Asn64 is a glycosylation site (N-linked (GlcNAc...) (complex) asparagine). An N-linked (GlcNAc...) asparagine glycan is attached at Asn94. N-linked (GlcNAc...) (complex) asparagine glycosylation is present at Asn117. N-linked (GlcNAc...) asparagine glycosylation occurs at Asn143. The cysteines at positions 146 and 185 are disulfide-linked. An N-linked (GlcNAc...) (complex) asparagine glycan is attached at Asn245. Residue Asn398 is glycosylated (N-linked (GlcNAc...) asparagine).

Belongs to the BPI/LBP/Plunc superfamily. BPI/LBP family. In terms of processing, glycosylation is necessary for secretion and its phospholipid transfer activity. As to expression, widely expressed. Highest level of expression in the ovary, thymus and placenta, with moderate levels found in the pancreas, small intestine, testis, lung and prostrate. Low level expression in the kidney, liver and spleen, with very low levels found in the heart, colon, skeletal muscle, leukocytes and brain. Expressed in the cortical neurons.

It is found in the secreted. The protein resides in the nucleus. It carries out the reaction a 1,2-diacyl-sn-glycero-3-phosphocholine(in) = a 1,2-diacyl-sn-glycero-3-phosphocholine(out). It catalyses the reaction a 1,2-diacyl-sn-glycero-3-phosphoethanolamine(in) = a 1,2-diacyl-sn-glycero-3-phosphoethanolamine(out). The enzyme catalyses a 1,2-diacyl-sn-glycerol(in) = a 1,2-diacyl-sn-glycerol(out). The catalysed reaction is a 1,2-diacyl-sn-glycero-3-phosphate(in) = a 1,2-diacyl-sn-glycero-3-phosphate(out). It carries out the reaction a sphingomyelin(in) = a sphingomyelin(out). It catalyses the reaction a 1,2-diacyl-sn-glycero-3-phospho-(1'-sn-glycerol)(in) = a 1,2-diacyl-sn-glycero-3-phospho-(1'-sn-glycerol)(out). The enzyme catalyses a 1,2-diacyl-sn-glycero-3-phospho-(1D-myo-inositol)(in) = a 1,2-diacyl-sn-glycero-3-phospho-(1D-myo-inositol)(out). The catalysed reaction is 1-hexadecanoyl-2-(5Z,8Z,11Z,14Z-eicosatetraenoyl)-sn-glycero-3-phosphoethanolamine(in) = 1-hexadecanoyl-2-(5Z,8Z,11Z,14Z-eicosatetraenoyl)-sn-glycero-3-phosphoethanolamine(out). It carries out the reaction N-(hexadecanoyl)-sphing-4-enine-1-phosphocholine(in) = N-(hexadecanoyl)-sphing-4-enine-1-phosphocholine(out). It catalyses the reaction 1,2-dihexadecanoyl-sn-glycero-3-phosphocholine(in) = 1,2-dihexadecanoyl-sn-glycero-3-phosphocholine(out). Functionally, mediates the transfer of phospholipids and free cholesterol from triglyceride-rich lipoproteins (low density lipoproteins or LDL and very low density lipoproteins or VLDL) into high-density lipoproteins (HDL) as well as the exchange of phospholipids between triglyceride-rich lipoproteins themselves. Facilitates the transfer of a spectrum of different lipid molecules, including diacylglycerol, phosphatidic acid, sphingomyelin, phosphatidylcholine, phosphatidylinositol, phosphatidylglycerol, cerebroside and phosphatidyl ethanolamine. Plays an important role in HDL remodeling which involves modulating the size and composition of HDL. Also plays a key role in the uptake of cholesterol from peripheral cells and tissues that is subsequently transported to the liver for degradation and excretion. Two distinct forms of PLTP exist in plasma: an active form that can transfer phosphatidylcholine from phospholipid vesicles to HDL, and an inactive form that lacks this capability. The chain is Phospholipid transfer protein (PLTP) from Homo sapiens (Human).